Here is a 384-residue protein sequence, read N- to C-terminus: Oxoeicosanoid receptor 1 (384 aa).

The tract at residues 1 to 21 is disordered; the sequence is MELHNLSSPSPSLSSSVLPPS. The Extracellular segment spans residues 1–58; sequence MELHNLSSPSPSLSSSVLPPSFSPSPSSAPSAFTTVGGSSGGPCHPTSSSLVSAFLAP. Asn-5 is a glycosylation site (N-linked (GlcNAc...) asparagine). The segment covering 7-21 has biased composition (low complexity); it reads SSPSPSLSSSVLPPS. A helical membrane pass occupies residues 59-79; that stretch reads ILALEFVLGLVGNSLALFIFC. Residues 80–87 lie on the Cytoplasmic side of the membrane; that stretch reads IHTRPWTS. A helical membrane pass occupies residues 88-108; sequence NTVFLVSLVAADFLLISNLPL. Residues 109 to 129 are Extracellular-facing; the sequence is RVDYYLLHETWRFGAAACKVN. A disulfide bond links Cys-126 and Cys-198. The helical transmembrane segment at 130–152 threads the bilayer; sequence LFMLSTNRTASVVFLTAIALNRY. The Cytoplasmic segment spans residues 153–172; it reads LKVVQPHHVLSRASVGAAAR. Residues 173 to 193 form a helical membrane-spanning segment; the sequence is VAGGLWVGILLLNGHLLLSTF. Over 194–215 the chain is Extracellular; sequence SGPSCLSYRVGTKPSASLRWHQ. The helical transmembrane segment at 216–236 threads the bilayer; sequence ALYLLEFFLPLALILFAIVSI. At 237 to 256 the chain is on the cytoplasmic side; the sequence is GLTIRNRGLGGQAGPQRAMR. A helical membrane pass occupies residues 257–277; it reads VLAMVVAVYTICFLPSIIFGM. Residues 278–297 are Extracellular-facing; it reads ASMVAFWLSACRSLDLCTQL. Residues 298–318 traverse the membrane as a helical segment; the sequence is FHGSLAFTYLNSVLDPVLYCF. The Cytoplasmic segment spans residues 319–384; that stretch reads SSPNFLHQSR…SLEKEGSSQG (66 aa).

The protein belongs to the G-protein coupled receptor 1 family. In terms of tissue distribution, expressed in various tissues except brain. Expression is more intense in liver, kidney, peripheral leukocyte, lung, and spleen than in other tissues. Highly expressed in eosinophils, neutrophils, and lung macrophages.

Its subcellular location is the membrane. Receptor for eicosanoids and polyunsaturated fatty acids such as 5-oxo-6E,8Z,11Z,14Z-eicosatetraenoic acid (5-OXO-ETE), 5(S)-hydroperoxy-6E,8Z,11Z,14Z-eicosatetraenoic acid (5(S)-HPETE) and arachidonic acid. Seems to be coupled to the G(i)/G(o), families of heteromeric G proteins. The polypeptide is Oxoeicosanoid receptor 1 (OXER1) (Homo sapiens (Human)).